Consider the following 389-residue polypeptide: Flap endonuclease 1 (389 aa).

The interval 1–105 (MGIKGLNKLL…GELAKRKERR (105 aa)) is N-domain. Mg(2+) is bound at residue Asp-34. The DNA site is built by Arg-47 and Arg-71. Mg(2+) contacts are provided by Asp-87, Glu-170, Glu-172, Asp-191, and Asp-193. An I-domain region spans residues 134–265 (DVTRFEKRTV…QTALKLMKEH (132 aa)). Glu-170 lines the DNA pocket. The DNA site is built by Gly-243 and Asp-245. Asp-245 provides a ligand contact to Mg(2+). The segment at 351 to 359 (PQARLDGFF) is interaction with PCNA. Residues 360 to 389 (KVMPKEGGEKRKADDKKTKGKKPATKKAKK) are disordered. The segment covering 362 to 376 (MPKEGGEKRKADDKK) has biased composition (basic and acidic residues). The segment covering 377–389 (TKGKKPATKKAKK) has biased composition (basic residues).

It belongs to the XPG/RAD2 endonuclease family. FEN1 subfamily. In terms of assembly, interacts with PCNA. Three molecules of FEN1 bind to one PCNA trimer with each molecule binding to one PCNA monomer. PCNA stimulates the nuclease activity without altering cleavage specificity. Requires Mg(2+) as cofactor. Phosphorylated. Phosphorylation upon DNA damage induces relocalization to the nuclear plasma.

It is found in the nucleus. It localises to the nucleolus. The protein localises to the nucleoplasm. The protein resides in the mitochondrion. Structure-specific nuclease with 5'-flap endonuclease and 5'-3' exonuclease activities involved in DNA replication and repair. During DNA replication, cleaves the 5'-overhanging flap structure that is generated by displacement synthesis when DNA polymerase encounters the 5'-end of a downstream Okazaki fragment. It enters the flap from the 5'-end and then tracks to cleave the flap base, leaving a nick for ligation. Also involved in the long patch base excision repair (LP-BER) pathway, by cleaving within the apurinic/apyrimidinic (AP) site-terminated flap. Acts as a genome stabilization factor that prevents flaps from equilibrating into structures that lead to duplications and deletions. Also possesses 5'-3' exonuclease activity on nicked or gapped double-stranded DNA, and exhibits RNase H activity. Also involved in replication and repair of rDNA and in repairing mitochondrial DNA. In Yarrowia lipolytica (strain CLIB 122 / E 150) (Yeast), this protein is Flap endonuclease 1.